The sequence spans 171 residues: 3-hydroxydecanoyl-[acyl-carrier-protein] dehydratase (171 aa).

His70 is an active-site residue.

It belongs to the thioester dehydratase family. FabA subfamily. Homodimer.

Its subcellular location is the cytoplasm. The enzyme catalyses a (3R)-hydroxyacyl-[ACP] = a (2E)-enoyl-[ACP] + H2O. It carries out the reaction (3R)-hydroxydecanoyl-[ACP] = (2E)-decenoyl-[ACP] + H2O. The catalysed reaction is (2E)-decenoyl-[ACP] = (3Z)-decenoyl-[ACP]. It functions in the pathway lipid metabolism; fatty acid biosynthesis. Functionally, necessary for the introduction of cis unsaturation into fatty acids. Catalyzes the dehydration of (3R)-3-hydroxydecanoyl-ACP to E-(2)-decenoyl-ACP and then its isomerization to Z-(3)-decenoyl-ACP. Can catalyze the dehydratase reaction for beta-hydroxyacyl-ACPs with saturated chain lengths up to 16:0, being most active on intermediate chain length. This Shewanella oneidensis (strain ATCC 700550 / JCM 31522 / CIP 106686 / LMG 19005 / NCIMB 14063 / MR-1) protein is 3-hydroxydecanoyl-[acyl-carrier-protein] dehydratase.